Consider the following 340-residue polypeptide: GTP-binding protein REM 2 (340 aa).

Over residues Met-1–Thr-13 the composition is skewed to acidic residues. Residues Met-1–Ala-107 are disordered. Residue Ser-27 is modified to Phosphoserine. Residues Leu-40 to Arg-53 show a composition bias toward basic and acidic residues. Positions Ser-93–Gly-104 are enriched in low complexity. GTP is bound by residues Gly-121–Ser-128, Asn-229–Asp-232, and Ala-260–Ala-261. Residues Arg-283–Leu-308 are disordered. A compositionally biased stretch (pro residues) spans Pro-293–Pro-302. Ser-295 bears the Phosphoserine mark.

It belongs to the small GTPase superfamily. RGK family.

The protein resides in the cell membrane. Functionally, binds GTP saturably and exhibits a low intrinsic rate of GTP hydrolysis. The chain is GTP-binding protein REM 2 (REM2) from Homo sapiens (Human).